Reading from the N-terminus, the 507-residue chain is ATP synthase subunit alpha, chloroplastic (507 aa).

170-177 is an ATP binding site; it reads GDRQTGKT. The residue at position 257 (Thr-257) is a Phosphothreonine.

This sequence belongs to the ATPase alpha/beta chains family. In terms of assembly, F-type ATPases have 2 components, CF(1) - the catalytic core - and CF(0) - the membrane proton channel. CF(1) has five subunits: alpha(3), beta(3), gamma(1), delta(1), epsilon(1). CF(0) has four main subunits: a, b, b' and c.

The protein resides in the plastid. The protein localises to the chloroplast thylakoid membrane. The catalysed reaction is ATP + H2O + 4 H(+)(in) = ADP + phosphate + 5 H(+)(out). Functionally, produces ATP from ADP in the presence of a proton gradient across the membrane. The alpha chain is a regulatory subunit. The polypeptide is ATP synthase subunit alpha, chloroplastic (Lobularia maritima (Sweet alyssum)).